The chain runs to 346 residues: Elongation factor Ts (346 aa).

The involved in Mg(2+) ion dislocation from EF-Tu stretch occupies residues 80 to 83 (TDFV).

Belongs to the EF-Ts family.

It is found in the cytoplasm. In terms of biological role, associates with the EF-Tu.GDP complex and induces the exchange of GDP to GTP. It remains bound to the aminoacyl-tRNA.EF-Tu.GTP complex up to the GTP hydrolysis stage on the ribosome. The chain is Elongation factor Ts from Streptococcus thermophilus (strain CNRZ 1066).